The following is a 262-amino-acid chain: Small ribosomal subunit protein uS2 (262 aa).

A disordered region spans residues 228–262; the sequence is VSNEEVAAEQNIDLDESKEATEAETTEENTSVESN.

Belongs to the universal ribosomal protein uS2 family.

This Staphylococcus saprophyticus subsp. saprophyticus (strain ATCC 15305 / DSM 20229 / NCIMB 8711 / NCTC 7292 / S-41) protein is Small ribosomal subunit protein uS2.